The following is a 156-amino-acid chain: Cellulose synthase operon protein D (156 aa).

It participates in glycan metabolism; bacterial cellulose biosynthesis. In terms of biological role, may have a major role in the perfection of crystallization, involved either in the pore structure itself or in the organization of the pores within the linear array of terminal synthesizing complexes (TCs). The polypeptide is Cellulose synthase operon protein D (Komagataeibacter xylinus (Gluconacetobacter xylinus)).